Reading from the N-terminus, the 138-residue chain is Large ribosomal subunit protein bL19 (138 aa).

Belongs to the bacterial ribosomal protein bL19 family.

In terms of biological role, this protein is located at the 30S-50S ribosomal subunit interface and may play a role in the structure and function of the aminoacyl-tRNA binding site. This chain is Large ribosomal subunit protein bL19, found in Rickettsia akari (strain Hartford).